A 451-amino-acid chain; its full sequence is E3 ubiquitin-protein ligase trul-1 (451 aa).

The RING-type; atypical zinc finger occupies 13-54; it reads CSICFEDLKQNDKISAIVCGHIYHHGCISQWIATKRQCPSCR. Coiled-coil stretches lie at residues 96–130 and 209–243; these read LKVE…EKDK and NKDL…DAAI. Disordered stretches follow at residues 270–297 and 389–442; these read RDVL…MIDP and KIPN…SSTS. Low complexity predominate over residues 427–442; the sequence is STRISSFFSRTTSSTS.

The protein belongs to the TRAIP family.

The protein resides in the nucleus. It localises to the chromosome. It carries out the reaction S-ubiquitinyl-[E2 ubiquitin-conjugating enzyme]-L-cysteine + [acceptor protein]-L-lysine = [E2 ubiquitin-conjugating enzyme]-L-cysteine + N(6)-ubiquitinyl-[acceptor protein]-L-lysine.. Its pathway is protein modification; protein ubiquitination. In terms of biological role, E3 ubiquitin ligase that acts as a key regulator of DNA repair in response to replication stress. Acts by mediating ubiquitination of the CMG helicase complex, promoting the unloading of the CMG helicase complex by the p97 ATPase (cdc-48.1 or cdc-48.2). The sequence is that of E3 ubiquitin-protein ligase trul-1 from Caenorhabditis elegans.